The primary structure comprises 121 residues: Small ribosomal subunit protein uS13 (121 aa).

Residues 96–121 (PVRGQNTKNNARTRKGKAVAIAGKKK) form a disordered region. Positions 106 to 121 (ARTRKGKAVAIAGKKK) are enriched in basic residues.

Belongs to the universal ribosomal protein uS13 family. In terms of assembly, part of the 30S ribosomal subunit. Forms a loose heterodimer with protein S19. Forms two bridges to the 50S subunit in the 70S ribosome.

Functionally, located at the top of the head of the 30S subunit, it contacts several helices of the 16S rRNA. In the 70S ribosome it contacts the 23S rRNA (bridge B1a) and protein L5 of the 50S subunit (bridge B1b), connecting the 2 subunits; these bridges are implicated in subunit movement. Contacts the tRNAs in the A and P-sites. The chain is Small ribosomal subunit protein uS13 from Streptococcus agalactiae serotype Ia (strain ATCC 27591 / A909 / CDC SS700).